The chain runs to 119 residues: Chorion class B protein M2807 (119 aa).

Residues 1–11 form a left arm region; it reads GGLGGGCGRGF. The segment at 12 to 80 is central domain; sequence SGGGLPVATA…GNGAVGITRE (69 aa). The interval 81–119 is right arm (Gly-rich tandem repeats); sequence GGLGYGAGYGDGYGLGYGGYGGGYGLGYGGYGGCGCGCG.

It belongs to the chorion protein family.

This protein is one of many from the eggshell of the silk moth. This chain is Chorion class B protein M2807, found in Bombyx mori (Silk moth).